We begin with the raw amino-acid sequence, 433 residues long: Protein translocase subunit SecY (433 aa).

10 helical membrane passes run 17–37, 71–91, 117–137, 141–161, 184–204, 212–232, 268–288, 310–330, 366–386, and 388–408; these read IVFTILILIVCRFGSFIPIPG, IFALAIMPYITASIIIQLMSV, LTVLLASFQAYGVAISLESIV, GPVVILAGFFFRITTVITLVV, LIIFIGIISGVPSAIISMFEL, PLIAIAVCIGVVVLIAIIIFF, GVIPPIFASSILLFPATLANF, YILLYVALIMFFSFFYTAIVF, LTVIGGIYLSVICVIPELLMN, and YVISLSLGGTSFLIVVNVVLD.

This sequence belongs to the SecY/SEC61-alpha family. As to quaternary structure, component of the Sec protein translocase complex. Heterotrimer consisting of SecY, SecE and SecG subunits. The heterotrimers can form oligomers, although 1 heterotrimer is thought to be able to translocate proteins. Interacts with the ribosome. Interacts with SecDF, and other proteins may be involved. Interacts with SecA.

It localises to the cell inner membrane. Its function is as follows. The central subunit of the protein translocation channel SecYEG. Consists of two halves formed by TMs 1-5 and 6-10. These two domains form a lateral gate at the front which open onto the bilayer between TMs 2 and 7, and are clamped together by SecE at the back. The channel is closed by both a pore ring composed of hydrophobic SecY resides and a short helix (helix 2A) on the extracellular side of the membrane which forms a plug. The plug probably moves laterally to allow the channel to open. The ring and the pore may move independently. In Rickettsia conorii (strain ATCC VR-613 / Malish 7), this protein is Protein translocase subunit SecY.